The chain runs to 220 residues: Ribosomal RNA large subunit methyltransferase E (220 aa).

The S-adenosyl-L-methionine site is built by Gly64, Trp66, Asp92, Asp108, and Asp133. The active-site Proton acceptor is Lys173.

This sequence belongs to the class I-like SAM-binding methyltransferase superfamily. RNA methyltransferase RlmE family.

It is found in the cytoplasm. The catalysed reaction is uridine(2552) in 23S rRNA + S-adenosyl-L-methionine = 2'-O-methyluridine(2552) in 23S rRNA + S-adenosyl-L-homocysteine + H(+). Specifically methylates the uridine in position 2552 of 23S rRNA at the 2'-O position of the ribose in the fully assembled 50S ribosomal subunit. The protein is Ribosomal RNA large subunit methyltransferase E of Acidovorax sp. (strain JS42).